Reading from the N-terminus, the 439-residue chain is Cysteine desulfurase-like protein ustD (439 aa).

The interval 1–25 is disordered; it reads MKSVATSSLDDVDKDSVPLGSSING. Residues 120 to 121, Asn206, and 255 to 257 contribute to the pyridoxal 5'-phosphate site; these read TT and SWY. The residue at position 258 (Lys258) is an N6-(pyridoxal phosphate)lysine.

This sequence belongs to the class-V pyridoxal-phosphate-dependent aminotransferase family. The cofactor is pyridoxal 5'-phosphate.

Its pathway is mycotoxin biosynthesis. Cysteine desulfurase-like protein; part of the gene cluster that mediates the biosynthesis of the secondary metabolite ustiloxin B, an antimitotic tetrapeptide. First, ustA is processed by the subtilisin-like endoprotease Kex2 that is outside the ustiloxin B gene cluster, at the C-terminal side of Arg-Lys, after transfer to Golgi apparatus through the endoplasmic reticulum (ER). Cleavage by KEX2 generates 16 peptides YAIG-I to YAIG-XVI. To process the precursor peptide further, at least two peptidases are necessary to cleave the N-terminal and C-terminal sides of the Tyr-Ala-Ile-Gly core peptide which serves as backbone for the synthesis of ustiloxin B, through cyclization and modification of the tyrosine with a non-protein coding amino acid, norvaline. One of the two peptidases must be the serine peptidase ustP; and the other pepdidase is probably ustH. Macrocyclization of the core peptide derived from ustA requires the tyrosinase ustQ, as well as the homologous oxidases ustYa and ustYb, and leads to the production of the first cyclization product N-desmethylustiloxin F. For the formation of N-desmethylustiloxin F, three oxidation steps are required, hydroxylation at the benzylic position, hydroxylation at either the aromatic ring of Tyr or beta-position of Ile, and oxidative cyclization. UstQ may catalyze the oxidation of a phenol moiety, whereas the ustYa and ustYb are most likely responsible for the remaining two-step oxidations. N-desmethylustiloxin F is then methylated by ustM to yield ustiloxin F which in turn substrate of the cytochrome P450 monooxygenase ustC which catalyzes the formation of S-deoxyustiloxin H. The flavoprotein monooxygenases ustF1 and ustF2 then participate in the modification of the side chain of S-deoxyustiloxin H, leading to the synthesis of an oxime intermediate, via ustiloxin H. Finally, carboxylative dehydration performed by the cysteine desulfurase-like protein ustD yields ustiloxin B. The protein is Cysteine desulfurase-like protein ustD of Aspergillus flavus (strain ATCC 200026 / FGSC A1120 / IAM 13836 / NRRL 3357 / JCM 12722 / SRRC 167).